A 457-amino-acid polypeptide reads, in one-letter code: MKIHFVGIGGIGMSAVALHEFSNGNDVYGSNIEETERTAYLRKLGIPIFVPHSADNWYDPDLVIKTPAVRDDNPEIVRARMERVPIENRLHYFRDTLKREKKEEFAVTGTDGKTTTTAMVAHVLKHLRKSPTVFLGGIMDSLEHGNYEKGNGPVVYELDESEEFFSEFSPNYLIITNARGDHLENYGNSLTRYRSAFEKISRNTDLVVTFAEDELTSHLGDVTFGVKKGTYTLEMRSASRAEQKAMVEKNGKRYLELKLKVPGFHNVLNALAVIALFDSLGYDLAPVLEALEEFRGVHRRFSIAFHDPETNIYVIDDYAHTPDEIRNLLQTAKEVFENEKIVVIFQPHRYSRLEREDGNFAKALQLADEVVVTEVYDAFEEKKNGISGKMIWDSLKSLGKEAYFVEKLPELEKVISVSENTVFLFVGAGDIIYSSRRFVERYQSSKSSPSRVLGSNK.

ATP is bound at residue 109-115; it reads GTDGKTT.

Belongs to the MurCDEF family.

The protein localises to the cytoplasm. It carries out the reaction UDP-N-acetyl-alpha-D-muramate + L-alanine + ATP = UDP-N-acetyl-alpha-D-muramoyl-L-alanine + ADP + phosphate + H(+). It functions in the pathway cell wall biogenesis; peptidoglycan biosynthesis. Its function is as follows. Cell wall formation. The chain is UDP-N-acetylmuramate--L-alanine ligase (murC) from Thermotoga maritima (strain ATCC 43589 / DSM 3109 / JCM 10099 / NBRC 100826 / MSB8).